We begin with the raw amino-acid sequence, 339 residues long: Sperm acrosome membrane-associated protein 6 (339 aa).

Positions 1–41 (MTSQRSLSSPQTRRPSVMGLISLVGSIVLLFLLIFRASTWA) are cleaved as a signal peptide. The short motif at 42–45 (CLFC) is the CXXC motif element. 6 cysteine pairs are disulfide-bonded: cysteine 42/cysteine 155, cysteine 45/cysteine 158, cysteine 56/cysteine 70, cysteine 140/cysteine 163, cysteine 144/cysteine 169, and cysteine 186/cysteine 241. Topologically, residues 42–310 (CLFCFTTYEE…NPQALTLGNL (269 aa)) are extracellular. A CXXC motif motif is present at residues 155–158 (CSGC). The 86-residue stretch at 166-251 (PLDCPVQDML…VILHDQRPLA (86 aa)) folds into the Ig-like domain. Asparagine 258 carries N-linked (GlcNAc...) asparagine glycosylation. The chain crosses the membrane as a helical span at residues 311 to 331 (FLLAATAALGSASVTLLVWLF). Residues 332–339 (FRWYLSGN) are Cytoplasmic-facing.

The protein belongs to the SPACA6 family. In terms of assembly, forms a complex with IZUMO1 and TMEM81 on spermatocyte cell membrane required for fertilization. As to expression, highly expressed in testis. Minor expression also detected in epididymis, seminal vesicle and ovary. Predominantly expressed in testicular germ cells during spermiogenesis. Most abundant in round spermatids and detected at lower levels in elongating spermatids.

The protein localises to the cytoplasmic vesicle. Its subcellular location is the secretory vesicle. It localises to the acrosome membrane. Sperm protein required for fusion of sperm with the egg membrane during fertilization. May regulate the expression of sperm surface protein DCST2. This is Sperm acrosome membrane-associated protein 6 from Mus musculus (Mouse).